Consider the following 120-residue polypeptide: NAD(P)H-quinone oxidoreductase subunit 3, chloroplastic (120 aa).

The next 3 helical transmembrane spans lie at 7 to 27 (YNYF…AFSI), 64 to 84 (MFAL…PWAM), and 89 to 109 (LGIP…IGLI).

Belongs to the complex I subunit 3 family. As to quaternary structure, NDH is composed of at least 16 different subunits, 5 of which are encoded in the nucleus.

The protein localises to the plastid. Its subcellular location is the chloroplast thylakoid membrane. It carries out the reaction a plastoquinone + NADH + (n+1) H(+)(in) = a plastoquinol + NAD(+) + n H(+)(out). The enzyme catalyses a plastoquinone + NADPH + (n+1) H(+)(in) = a plastoquinol + NADP(+) + n H(+)(out). Functionally, NDH shuttles electrons from NAD(P)H:plastoquinone, via FMN and iron-sulfur (Fe-S) centers, to quinones in the photosynthetic chain and possibly in a chloroplast respiratory chain. The immediate electron acceptor for the enzyme in this species is believed to be plastoquinone. Couples the redox reaction to proton translocation, and thus conserves the redox energy in a proton gradient. The chain is NAD(P)H-quinone oxidoreductase subunit 3, chloroplastic from Anthoceros angustus (Hornwort).